Reading from the N-terminus, the 65-residue chain is Large ribosomal subunit protein bL35 (65 aa).

Disordered stretches follow at residues 1–23 and 36–65; these read MPKL…GGFK and MTTK…MPYA. Residues 54 to 65 are compositionally biased toward polar residues; it reads DTTSLVQQMPYA.

It belongs to the bacterial ribosomal protein bL35 family.

The protein is Large ribosomal subunit protein bL35 of Francisella tularensis subsp. tularensis (strain FSC 198).